The sequence spans 186 residues: ADP-ribosylation factor-like protein DDB_G0292332 (186 aa).

Residues 24 to 31, 78 to 82, and 138 to 141 contribute to the GTP site; these read GVENVGKT, DIGGK, and NKQD.

Belongs to the small GTPase superfamily. Arf family.

Functionally, binds and exchanges GTP and GDP. The chain is ADP-ribosylation factor-like protein DDB_G0292332 from Dictyostelium discoideum (Social amoeba).